Reading from the N-terminus, the 293-residue chain is 4-diphosphocytidyl-2-C-methyl-D-erythritol kinase (293 aa).

Residue K10 is part of the active site. 94–104 is an ATP binding site; the sequence is PVSAGLAGGSS. D136 is a catalytic residue.

It belongs to the GHMP kinase family. IspE subfamily.

It catalyses the reaction 4-CDP-2-C-methyl-D-erythritol + ATP = 4-CDP-2-C-methyl-D-erythritol 2-phosphate + ADP + H(+). The protein operates within isoprenoid biosynthesis; isopentenyl diphosphate biosynthesis via DXP pathway; isopentenyl diphosphate from 1-deoxy-D-xylulose 5-phosphate: step 3/6. Functionally, catalyzes the phosphorylation of the position 2 hydroxy group of 4-diphosphocytidyl-2C-methyl-D-erythritol. The sequence is that of 4-diphosphocytidyl-2-C-methyl-D-erythritol kinase from Listeria monocytogenes serotype 4b (strain CLIP80459).